The following is a 453-amino-acid chain: Serine/threonine-protein phosphatase 2A 55 kDa regulatory subunit B delta isoform (453 aa).

WD repeat units follow at residues 32–71 (AEAD…KGRA), 97–138 (EIEE…KRAE), 181–219 (AHTY…RSFN), and 230–270 (ELTE…LCDR). Serine 285 is modified (phosphoserine). 3 WD repeats span residues 289–327 (EIIS…RPVE), 344–385 (ENDC…DVTL), and 420–452 (DFNK…QDKI). Position 305 is a phosphotyrosine (tyrosine 305). Residue threonine 308 is modified to Phosphothreonine.

Belongs to the phosphatase 2A regulatory subunit B family. In terms of assembly, PP2A consists of a common heterodimeric core enzyme, composed of a 36 kDa catalytic subunit (subunit C) and a 65 kDa constant regulatory subunit (PR65 or subunit A), that associates with a variety of regulatory subunits. Proteins that associate with the core dimer include three families of regulatory subunits B (the R2/B/PR55/B55, R3/B''/PR72/PR130/PR59 and R5/B'/B56 families), the 48 kDa variable regulatory subunit, viral proteins, and cell signaling molecules. Interacts with IER5.

The protein resides in the cytoplasm. In terms of biological role, substrate-recognition subunit of protein phosphatase 2A (PP2A) that plays a key role in cell cycle by controlling mitosis entry and exit. Involved in chromosome clustering during late mitosis by mediating dephosphorylation of MKI67. The activity of PP2A complexes containing PPP2R2D (PR55-delta) fluctuate during the cell cycle: the activity is high in interphase and low in mitosis. The sequence is that of Serine/threonine-protein phosphatase 2A 55 kDa regulatory subunit B delta isoform from Mus musculus (Mouse).